The primary structure comprises 116 residues: Large ribosomal subunit protein bL17 (116 aa).

This sequence belongs to the bacterial ribosomal protein bL17 family. In terms of assembly, part of the 50S ribosomal subunit. Contacts protein L32.

In Prochlorococcus marinus (strain SARG / CCMP1375 / SS120), this protein is Large ribosomal subunit protein bL17.